We begin with the raw amino-acid sequence, 113 residues long: Hydrogenase maturation factor HypA (113 aa).

Residue His-2 participates in Ni(2+) binding. Cys-73, Cys-76, Cys-89, and Cys-92 together coordinate Zn(2+).

The protein belongs to the HypA/HybF family.

Its function is as follows. Involved in the maturation of [NiFe] hydrogenases. Required for nickel insertion into the metal center of the hydrogenase. In Aeromonas salmonicida (strain A449), this protein is Hydrogenase maturation factor HypA.